Reading from the N-terminus, the 246-residue chain is 5'-nucleotidase SurE (246 aa).

4 residues coordinate a divalent metal cation: Asp-8, Asp-9, Ser-39, and Asn-91.

The protein belongs to the SurE nucleotidase family. Requires a divalent metal cation as cofactor.

The protein localises to the cytoplasm. It carries out the reaction a ribonucleoside 5'-phosphate + H2O = a ribonucleoside + phosphate. Nucleotidase that shows phosphatase activity on nucleoside 5'-monophosphates. This Histophilus somni (strain 129Pt) (Haemophilus somnus) protein is 5'-nucleotidase SurE.